Here is a 145-residue protein sequence, read N- to C-terminus: Large ribosomal subunit protein uL11 (145 aa).

It belongs to the universal ribosomal protein uL11 family. Part of the ribosomal stalk of the 50S ribosomal subunit. Interacts with L10 and the large rRNA to form the base of the stalk. L10 forms an elongated spine to which L12 dimers bind in a sequential fashion forming a multimeric L10(L12)X complex. In terms of processing, one or more lysine residues are methylated.

Forms part of the ribosomal stalk which helps the ribosome interact with GTP-bound translation factors. This is Large ribosomal subunit protein uL11 from Rickettsia africae (strain ESF-5).